Here is a 460-residue protein sequence, read N- to C-terminus: C4-dicarboxylate transport protein (460 aa).

The next 8 membrane-spanning stretches (helical) occupy residues 21-38 (LYFQVIVAIVIGILIGHF), 53-75 (FIKLIKMVIAPIIFCTVVSGIAG), 88-110 (YALLYFEIVSTIALLIGLIVVNV), 153-175 (IVGAFANGDILQVLMFSVIFGFA), 196-218 (VMFNIINMIMKLAPIGAFGAMAF), 231-253 (LGQLMICFYITCVLFVVLVLGSI), 301-323 (VVGLVIPTGYSFNLDGTSIYLTM), and 363-385 (FIVLAATLSAVGHLPVAGLALIL). The interval 438–460 (PEDDLGVAEGPTPANAVNTTKTV) is disordered.

The protein belongs to the dicarboxylate/amino acid:cation symporter (DAACS) (TC 2.A.23) family.

The protein localises to the cell inner membrane. Its function is as follows. Responsible for the transport of dicarboxylates such as succinate, fumarate, and malate from the periplasm across the membrane. This is C4-dicarboxylate transport protein from Pseudomonas syringae pv. tomato (strain ATCC BAA-871 / DC3000).